A 456-amino-acid chain; its full sequence is Enolase (456 aa).

Residue Gln-167 coordinates (2R)-2-phosphoglycerate. Catalysis depends on Glu-209, which acts as the Proton donor. Mg(2+) contacts are provided by Asp-250, Glu-312, and Asp-339. Positions 364, 393, 394, and 415 each coordinate (2R)-2-phosphoglycerate. Lys-364 serves as the catalytic Proton acceptor.

This sequence belongs to the enolase family. The cofactor is Mg(2+).

Its subcellular location is the cytoplasm. The protein resides in the secreted. It localises to the cell surface. The catalysed reaction is (2R)-2-phosphoglycerate = phosphoenolpyruvate + H2O. Its pathway is carbohydrate degradation; glycolysis; pyruvate from D-glyceraldehyde 3-phosphate: step 4/5. Catalyzes the reversible conversion of 2-phosphoglycerate (2-PG) into phosphoenolpyruvate (PEP). It is essential for the degradation of carbohydrates via glycolysis. The chain is Enolase from Mycoplasmopsis pulmonis (strain UAB CTIP) (Mycoplasma pulmonis).